We begin with the raw amino-acid sequence, 88 residues long: Transcription factor ILI5 (88 aa).

Positions 1–54 (MSSRRSSRGSISEEEINELISKLQSLLPNSRRRGSSQASTTKLLKETCNYIKSL) constitute a bHLH domain.

The protein belongs to the bHLH protein family. Interacts with APG.

The protein resides in the nucleus. In terms of biological role, atypical and probable non DNA-binding bHLH transcription factor that acts as a positive regulator of grain size. Binds the transcription repressor APG and forms a heterodimer of antagonistic basic helix-loop-helix transcription factors that regulates grain length and weight by controlling cell elongation in lemma and palea. This is Transcription factor ILI5 (ILI5) from Oryza sativa subsp. indica (Rice).